Here is a 573-residue protein sequence, read N- to C-terminus: Probable cytochrome c oxidase subunit 1 (573 aa).

A helical transmembrane segment spans residues 40-60 (IGIMYCVACISFFFIGGLLAL). His-86 lines the Fe(II)-heme a pocket. Transmembrane regions (helical) follow at residues 89–109 (IMLL…VLPL), 121–141 (LNAF…AGFI), 170–190 (LWIM…VNMI), 213–233 (IMVT…ALFG), 258–278 (LFWF…FGIV), and 290–310 (IFGY…SVAV). Residues His-264 and Tyr-268 each coordinate Cu cation. Residues 264-268 (HPEVY) constitute a cross-link (1'-histidyl-3'-tyrosine (His-Tyr)). Residues His-313 and His-314 each contribute to the Cu cation site. A run of 2 helical transmembrane segments spans residues 315 to 335 (MFAT…LIAV) and 359 to 379 (MLFS…GVLL). His-397 serves as a coordination point for heme a3. A run of 3 helical transmembrane segments spans residues 398–418 (FHYV…YFWF), 433–453 (LHFW…HWLG), and 476–496 (VSTI…WNVF). Fe(II)-heme a is bound at residue His-399.

This sequence belongs to the heme-copper respiratory oxidase family.

The protein localises to the cell membrane. The catalysed reaction is 4 Fe(II)-[cytochrome c] + O2 + 8 H(+)(in) = 4 Fe(III)-[cytochrome c] + 2 H2O + 4 H(+)(out). The protein operates within energy metabolism; oxidative phosphorylation. In terms of biological role, cytochrome c oxidase is the component of the respiratory chain that catalyzes the reduction of oxygen to water. Subunits 1-3 form the functional core of the enzyme complex. CO I is the catalytic subunit of the enzyme. Electrons originating in cytochrome c are transferred via the copper A center of subunit 2 and heme A of subunit 1 to the bimetallic center formed by heme A3 and copper B. The protein is Probable cytochrome c oxidase subunit 1 (ctaD) of Mycobacterium bovis (strain ATCC BAA-935 / AF2122/97).